The chain runs to 103 residues: DNA-directed RNA polymerase subunit omega (103 aa).

Belongs to the RNA polymerase subunit omega family. The RNAP catalytic core consists of 2 alpha, 1 beta, 1 beta' and 1 omega subunit. When a sigma factor is associated with the core the holoenzyme is formed, which can initiate transcription.

It carries out the reaction RNA(n) + a ribonucleoside 5'-triphosphate = RNA(n+1) + diphosphate. Its function is as follows. Promotes RNA polymerase assembly. Latches the N- and C-terminal regions of the beta' subunit thereby facilitating its interaction with the beta and alpha subunits. This Streptococcus agalactiae serotype III (strain NEM316) protein is DNA-directed RNA polymerase subunit omega.